Reading from the N-terminus, the 155-residue chain is Ribosome maturation factor RimP (155 aa).

It belongs to the RimP family.

The protein localises to the cytoplasm. Its function is as follows. Required for maturation of 30S ribosomal subunits. This Listeria welshimeri serovar 6b (strain ATCC 35897 / DSM 20650 / CCUG 15529 / CIP 8149 / NCTC 11857 / SLCC 5334 / V8) protein is Ribosome maturation factor RimP.